A 553-amino-acid polypeptide reads, in one-letter code: CTP synthase (553 aa).

The tract at residues Met-1 to Leu-270 is amidoligase domain. Ser-13 provides a ligand contact to CTP. A UTP-binding site is contributed by Ser-13. Residues Ser-14 to Ile-19 and Asp-71 contribute to the ATP site. Asp-71 and Glu-144 together coordinate Mg(2+). Residues Asp-151–Glu-153, Lys-191–Gln-196, and Lys-227 contribute to the CTP site. Residues Lys-191–Gln-196 and Lys-227 contribute to the UTP site. Positions Thr-295–Ala-547 constitute a Glutamine amidotransferase type-1 domain. An L-glutamine-binding site is contributed by Gly-356. Cys-383 functions as the Nucleophile; for glutamine hydrolysis in the catalytic mechanism. Residues Leu-384–Gln-387, Glu-407, and Arg-473 contribute to the L-glutamine site. Catalysis depends on residues His-520 and Glu-522.

It belongs to the CTP synthase family. As to quaternary structure, homotetramer.

It carries out the reaction UTP + L-glutamine + ATP + H2O = CTP + L-glutamate + ADP + phosphate + 2 H(+). It catalyses the reaction L-glutamine + H2O = L-glutamate + NH4(+). The enzyme catalyses UTP + NH4(+) + ATP = CTP + ADP + phosphate + 2 H(+). The protein operates within pyrimidine metabolism; CTP biosynthesis via de novo pathway; CTP from UDP: step 2/2. Its activity is regulated as follows. Allosterically activated by GTP, when glutamine is the substrate; GTP has no effect on the reaction when ammonia is the substrate. The allosteric effector GTP functions by stabilizing the protein conformation that binds the tetrahedral intermediate(s) formed during glutamine hydrolysis. Inhibited by the product CTP, via allosteric rather than competitive inhibition. Functionally, catalyzes the ATP-dependent amination of UTP to CTP with either L-glutamine or ammonia as the source of nitrogen. Regulates intracellular CTP levels through interactions with the four ribonucleotide triphosphates. This is CTP synthase from Polynucleobacter asymbioticus (strain DSM 18221 / CIP 109841 / QLW-P1DMWA-1) (Polynucleobacter necessarius subsp. asymbioticus).